Here is a 769-residue protein sequence, read N- to C-terminus: Protein lethal(2)denticleless (769 aa).

6 WD repeats span residues 99–129, 143–174, 194–249, 264–303, 320–349, and 362–393; these read CHFN…RLWE, GHTR…LIWD, GHTG…KVWD, RHKL…YCYN, NSTF…YIWN, and GHTV…KIWR. A disordered region spans residues 196–221; sequence TGGPGTPVSQRKQRTRTPKMAGGTTS. Threonine 201 is subject to Phosphothreonine. The residue at position 204 (serine 204) is a Phosphoserine. Disordered regions lie at residues 448–467, 476–562, and 655–769; these read RLMD…TTKR, AGQE…HVYT, and SPRL…VGSD. A Phosphothreonine modification is found at threonine 456. Serine 459 is modified (phosphoserine). Residues 503-518 are compositionally biased toward polar residues; sequence PSSQETACRHIQLQSI. Serine 524 carries the post-translational modification Phosphoserine. Over residues 524-533 the composition is skewed to basic and acidic residues; the sequence is SPSKRQKENS. Polar residues predominate over residues 546–562; the sequence is STPSHSPLSENVNHVYT. Serine 655 is modified (phosphoserine). Positions 657–666 are enriched in polar residues; the sequence is RLQSLRQSEC. Phosphoserine occurs at positions 679, 691, and 711. A compositionally biased stretch (low complexity) spans 689–704; sequence AGSSSHSHSQSQPKTP. Residues 705 to 714 are compositionally biased toward polar residues; it reads TSSRRNSETT. Positions 728–743 are enriched in low complexity; sequence PAEETTTTNAAPSSSD. Residues 758-769 are compositionally biased toward polar residues; sequence SMRTPTTAVGSD.

It belongs to the WD repeat cdt2 family. In terms of assembly, component of the DCX(DTL) E3 ubiquitin ligase complex, at least composed of Cul-4, pic/DDB1, l(2)dtl/CDT2 and Roc1a. As to expression, ubiquitously expressed during embryogenesis with no sign of tissue specificity in expression up to stage 17.

The protein localises to the cytoplasm. Its pathway is protein modification; protein ubiquitination. In terms of biological role, substrate-specific adapter of a DCX (DDB1-CUL4-X-box) E3 ubiquitin-protein ligase complex required for cell cycle control. The DCX(DTL) complex, also named CRL4(CDT2) complex, mediates the polyubiquitination and subsequent degradation of E2f during S phase. E2f degradation is necessary to ensure proper development. Substrates require their interaction with PCNA for their polyubiquitination: substrates interact with PCNA via their PIP-box, leading to recruit the DCX(DTL) complex. The polypeptide is Protein lethal(2)denticleless (l(2)dtl) (Drosophila melanogaster (Fruit fly)).